A 344-amino-acid chain; its full sequence is Arginine N-succinyltransferase (344 aa).

Leu125 is a binding site for succinyl-CoA. His229 serves as the catalytic Proton donor.

Belongs to the arginine N-succinyltransferase family.

It carries out the reaction succinyl-CoA + L-arginine = N(2)-succinyl-L-arginine + CoA + H(+). It functions in the pathway amino-acid degradation; L-arginine degradation via AST pathway; L-glutamate and succinate from L-arginine: step 1/5. Catalyzes the transfer of succinyl-CoA to arginine to produce N(2)-succinylarginine. This is Arginine N-succinyltransferase from Escherichia coli O6:H1 (strain CFT073 / ATCC 700928 / UPEC).